Consider the following 41-residue polypeptide: Photosystem I reaction center subunit IX (41 aa).

A helical membrane pass occupies residues Tyr-7–Ile-27.

Belongs to the PsaJ family.

Its subcellular location is the plastid. The protein resides in the chloroplast thylakoid membrane. In terms of biological role, may help in the organization of the PsaE and PsaF subunits. The polypeptide is Photosystem I reaction center subunit IX (Trieres chinensis (Marine centric diatom)).